Consider the following 201-residue polypeptide: Natural cytotoxicity triggering receptor 3 (201 aa).

The N-terminal stretch at 1–18 (MAWMLLLILIMVYPGSCA) is a signal peptide. An Ig-like domain is found at 19–126 (LWVSQPPEIR…VGTGNGTRLV (108 aa)). Topologically, residues 19–133 (LWVSQPPEIR…RLVVEKEYPQ (115 aa)) are extracellular. Cys39 and Cys108 are joined by a disulfide. 2 N-linked (GlcNAc...) asparagine glycosylation sites follow: Asn42 and Asn121. The chain crosses the membrane as a helical span at residues 134–154 (LGAGTVLLLRAGFYAVSFLSV). Residues 155-201 (AMGSTLYYQGKCLTWKGPRRQLPAVVPGPLPPPCGSSAHLLPPVPGG) are Cytoplasmic-facing.

It belongs to the natural cytotoxicity receptor (NCR) family. As to quaternary structure, homodimer in the unliganted form. Interacts with CD3Z. Interacts with and is activated by binding to NCR3LG1. Interacts with and is activated by binding to BAG6. Interacts with and is inhibited by binding to LGALS3.

The protein localises to the cell membrane. Functionally, cell membrane receptor of natural killer/NK cells that is activated by binding of extracellular ligands including BAG6 and NCR3LG1. Stimulates NK cells cytotoxicity toward neighboring cells producing these ligands. It controls, for instance, NK cells cytotoxicity against tumor cells. Engagement of NCR3 by BAG6 also promotes myeloid dendritic cells (DC) maturation, both through killing DCs that did not acquire a mature phenotype, and inducing the release by NK cells of TNFA and IFNG that promote DC maturation. The polypeptide is Natural cytotoxicity triggering receptor 3 (NCR3) (Macaca mulatta (Rhesus macaque)).